Consider the following 280-residue polypeptide: MSTLHKFKAYFGMVPLEDYEDDYVDDRAPRASERGGARGPRPYSERAGYGADRYGEDRYSADRFGPERFGAERFGPDRFGADRFDEDADYPEPAYKSYKSGYPVARRDDYPEDAYGEDRYEAPRRPTRIDAAPSSGRFRAGGGAPMLRGATRGALAVDPEAEERRLEERMRPEPVVARRPGIFEDGGPLSKITTLRPRDYSEARIIGERFREGNPVIMDLVELSNADAKRLVDFAAGLAFALRGSFDKVATKVFLLSPADVDVSAEERRRIAETGFYNQK.

The disordered stretch occupies residues 22–117 (DYVDDRAPRA…DDYPEDAYGE (96 aa)). Composition is skewed to basic and acidic residues over residues 25-36 (DDRAPRASERGG) and 53-83 (RYGE…GADR).

This sequence belongs to the SepF family. Homodimer. Interacts with FtsZ.

It localises to the cytoplasm. In terms of biological role, cell division protein that is part of the divisome complex and is recruited early to the Z-ring. Probably stimulates Z-ring formation, perhaps through the cross-linking of FtsZ protofilaments. Its function overlaps with FtsA. The chain is Cell division protein SepF from Nocardia farcinica (strain IFM 10152).